Reading from the N-terminus, the 590-residue chain is Aspartate--tRNA(Asp/Asn) ligase (590 aa).

An L-aspartate-binding site is contributed by E175. The segment at 199–202 (QQFK) is aspartate. L-aspartate is bound by residues R221 and H452. 221-223 (RDE) contacts ATP. E485 provides a ligand contact to ATP. R492 is an L-aspartate binding site. 537-540 (GIDR) provides a ligand contact to ATP.

The protein belongs to the class-II aminoacyl-tRNA synthetase family. Type 1 subfamily. In terms of assembly, homodimer.

The protein resides in the cytoplasm. It catalyses the reaction tRNA(Asx) + L-aspartate + ATP = L-aspartyl-tRNA(Asx) + AMP + diphosphate. Aspartyl-tRNA synthetase with relaxed tRNA specificity since it is able to aspartylate not only its cognate tRNA(Asp) but also tRNA(Asn). Reaction proceeds in two steps: L-aspartate is first activated by ATP to form Asp-AMP and then transferred to the acceptor end of tRNA(Asp/Asn). This Dinoroseobacter shibae (strain DSM 16493 / NCIMB 14021 / DFL 12) protein is Aspartate--tRNA(Asp/Asn) ligase.